A 469-amino-acid chain; its full sequence is Dihydroorotate dehydrogenase (quinone), mitochondrial (469 aa).

The N-terminal 37 residues, 1 to 37, are a transit peptide targeting the mitochondrion; the sequence is MSSSAAALAWRRSLRDALLRGSAWRGAPAANSAAARL. The helical transmembrane segment at 62–82 threads the bilayer; that stretch reads LLTGAMIGLAIAGGAYVSTAD. Residues 150–154 and S174 each bind FMN; that span reads AGFDK. A substrate-binding site is contributed by K154. 199–203 provides a ligand contact to substrate; that stretch reads NRCGF. The disordered stretch occupies residues 219 to 247; sequence HGKRKMEETSSSTSPTTSDVKQGGKAGPG. Over residues 227–236 the composition is skewed to low complexity; the sequence is TSSSTSPTTS. FMN-binding residues include N252 and N283. 283-288 lines the substrate pocket; it reads NVSSPN. S286 (nucleophile) is an active-site residue. FMN contacts are provided by K328 and S356. 357–358 lines the substrate pocket; it reads NT. Residues G380, G409, and 430-431 contribute to the FMN site; that span reads YT.

The protein belongs to the dihydroorotate dehydrogenase family. Type 2 subfamily. Requires FMN as cofactor.

It localises to the mitochondrion inner membrane. The enzyme catalyses (S)-dihydroorotate + a quinone = orotate + a quinol. It participates in pyrimidine metabolism; UMP biosynthesis via de novo pathway; orotate from (S)-dihydroorotate (quinone route): step 1/1. Its function is as follows. Catalyzes the conversion of dihydroorotate to orotate with quinone as electron acceptor. This is Dihydroorotate dehydrogenase (quinone), mitochondrial (PYRD) from Oryza sativa subsp. japonica (Rice).